Reading from the N-terminus, the 763-residue chain is Amine oxidase [copper-containing] 3 (763 aa).

At 2-6 the chain is on the cytoplasmic side; it reads TQKTT. The helical; Signal-anchor for type II membrane protein transmembrane segment at 7 to 27 threads the bilayer; that stretch reads LVLLALAVITIFALVCVLLAG. Residues 28-763 lie on the Extracellular side of the membrane; sequence RSGDGGRLSQ…AFSHGGFTYK (736 aa). The N-linked (GlcNAc...) asparagine glycan is linked to N137. C198 and C199 are disulfide-bonded. Residues N232 and N294 are each glycosylated (N-linked (GlcNAc...) asparagine). The active-site Proton acceptor is D386. C404 and C430 are disulfide-bonded. The active-site Schiff-base intermediate with substrate; via topaquinone is the Y471. Y471 carries the post-translational modification 2',4',5'-topaquinone. Residues H520 and H522 each coordinate Cu(2+). Ca(2+)-binding residues include D529, L530, D531, and E572. N-linked (GlcNAc...) asparagine glycosylation is found at N581 and N592. The Ca(2+) site is built by E641 and F663. N666 carries N-linked (GlcNAc...) asparagine glycosylation. Ca(2+) contacts are provided by E667, D673, and L674. Cu(2+) is bound at residue H684. Cysteines 734 and 741 form a disulfide.

Belongs to the copper/topaquinone oxidase family. In terms of assembly, homodimer; disulfide-linked. Probably forms heterodimers with AOC2. Cu(2+) serves as cofactor. Ca(2+) is required as a cofactor. The cofactor is L-topaquinone. In terms of processing, topaquinone (TPQ) is generated by copper-dependent autoxidation of a specific tyrosyl residue. N- and O-glycosylated. Highly expressed in adipocytes, aorta and lung. Expressed at lower levels in heart, kidney, large intestine, liver, small intestine and stomach.

It is found in the cell membrane. It carries out the reaction methylamine + O2 + H2O = formaldehyde + H2O2 + NH4(+). The catalysed reaction is benzylamine + O2 + H2O = benzaldehyde + H2O2 + NH4(+). It catalyses the reaction 2-phenylethylamine + O2 + H2O = 2-phenylacetaldehyde + H2O2 + NH4(+). Its function is as follows. Catalyzes the oxidative deamination of primary amines to the corresponding aldehydes with the concomitant production of hydrogen peroxide and ammonia. Has a preference for the primary monoamines methylamine and benzylamine. Could also act on 2-phenylethylamine but much less efficiently. At endothelial cells surface can also function as a cell adhesion protein that participates in lymphocyte extravasation and recirculation by mediating the binding of lymphocytes to peripheral lymph node vascular endothelial cells in an L-selectin-independent fashion. The chain is Amine oxidase [copper-containing] 3 from Rattus norvegicus (Rat).